The primary structure comprises 237 residues: Sensory rhodopsin-2 (237 aa).

Residues 1 to 2 (MA) lie on the Extracellular side of the membrane. The chain crosses the membrane as a helical span at residues 3–23 (LTTWFWVGAVGMLAGTVLPIR). Over 24–31 (DCIRHPSH) the chain is Cytoplasmic. A helical membrane pass occupies residues 32 to 53 (RRYDLVLAGITGLAAIAYTTMG). Residues 54 to 67 (LGITATTVGDRTVY) lie on the Extracellular side of the membrane. Residues 68–89 (LARYIDWLVTTPLIVLYLAMLA) form a helical membrane-spanning segment. The Cytoplasmic portion of the chain corresponds to 90–92 (RPG). The chain crosses the membrane as a helical span at residues 93 to 115 (HRTSAWLLAADVFVIAAGIAAAL). Over 116–119 (TTGV) the chain is Extracellular. The chain crosses the membrane as a helical span at residues 120 to 147 (QRWLFFAVGAAGYAALLYGLLGTLPRAL). Residues 148–150 (GDD) are Cytoplasmic-facing. Residues 151 to 178 (PRVRSLFVTLRNITVVLWTLYPVVWLLS) traverse the membrane as a helical segment. Residues 179–186 (PAGIGILQ) are Extracellular-facing. Residues 187–214 (TEMYTIVVVYLDFISKVAFVAFAVLGAD) form a helical membrane-spanning segment. Lysine 202 bears the N6-(retinylidene)lysine mark. Over 215–237 (AVSRLVAADAAAPATAEPTPDGD) the chain is Cytoplasmic.

Belongs to the archaeal/bacterial/fungal opsin family. Interacts with HTR-II.

Its subcellular location is the cell membrane. In terms of biological role, photophobic photoreceptor responsible for the negative phototaxis. Activates the sensory rhodopsin II transducer (HTR-II) in response to blue light. The polypeptide is Sensory rhodopsin-2 (sop2) (Halobacterium salinarum (strain ATCC 700922 / JCM 11081 / NRC-1) (Halobacterium halobium)).